The primary structure comprises 448 residues: Trigger factor (448 aa).

In terms of domain architecture, PPIase FKBP-type spans 172-257 (GDRVTVDFVG…MKKIEWPHLP (86 aa)).

Belongs to the FKBP-type PPIase family. Tig subfamily.

The protein resides in the cytoplasm. It catalyses the reaction [protein]-peptidylproline (omega=180) = [protein]-peptidylproline (omega=0). Functionally, involved in protein export. Acts as a chaperone by maintaining the newly synthesized protein in an open conformation. Functions as a peptidyl-prolyl cis-trans isomerase. The protein is Trigger factor of Burkholderia cenocepacia (strain HI2424).